Here is a 310-residue protein sequence, read N- to C-terminus: HTH-type transcriptional activator TtdR (310 aa).

Residues 6-63 (PLAKDLQVLVEIVHSGSFSAAAATLGQTPAFVTKRIQILENTLATTLLNRSARGVALT) enclose the HTH lysR-type domain. A DNA-binding region (H-T-H motif) is located at residues 23–42 (FSAAAATLGQTPAFVTKRIQ).

The protein belongs to the LysR transcriptional regulatory family.

Positive regulator required for L-tartrate-dependent anaerobic growth on glycerol. Induces expression of the ttdA-ttdB-ygjE operon. The chain is HTH-type transcriptional activator TtdR (ttdR) from Escherichia coli (strain K12).